The sequence spans 180 residues: ATP synthase subunit delta (180 aa).

Belongs to the ATPase delta chain family. In terms of assembly, F-type ATPases have 2 components, F(1) - the catalytic core - and F(0) - the membrane proton channel. F(1) has five subunits: alpha(3), beta(3), gamma(1), delta(1), epsilon(1). F(0) has three main subunits: a(1), b(2) and c(10-14). The alpha and beta chains form an alternating ring which encloses part of the gamma chain. F(1) is attached to F(0) by a central stalk formed by the gamma and epsilon chains, while a peripheral stalk is formed by the delta and b chains.

It localises to the cell membrane. In terms of biological role, f(1)F(0) ATP synthase produces ATP from ADP in the presence of a proton or sodium gradient. F-type ATPases consist of two structural domains, F(1) containing the extramembraneous catalytic core and F(0) containing the membrane proton channel, linked together by a central stalk and a peripheral stalk. During catalysis, ATP synthesis in the catalytic domain of F(1) is coupled via a rotary mechanism of the central stalk subunits to proton translocation. This protein is part of the stalk that links CF(0) to CF(1). It either transmits conformational changes from CF(0) to CF(1) or is implicated in proton conduction. This Leuconostoc citreum (strain KM20) protein is ATP synthase subunit delta.